A 575-amino-acid polypeptide reads, in one-letter code: G protein-coupled receptor kinase 4 (575 aa).

N-acetylmethionine is present on Met1. The interval 1 to 153 (MELENFMANT…DCAGVIYKYL (153 aa)) is N-terminal. Residues 51 to 171 (DFSSLCDQQP…QESTYYNRFL (121 aa)) enclose the RGS domain. The Protein kinase domain occupies 186–448 (FRQYRVLGKG…ASAVKQHPIF (263 aa)). ATP-binding positions include 192-200 (LGKGGFGEV) and Lys215. The Proton acceptor role is filled by Asp311. In terms of domain architecture, AGC-kinase C-terminal spans 449–514 (KDINFSRLEA…GCVTIPWQNE (66 aa)). Ser484 is subject to Phosphoserine.

This sequence belongs to the protein kinase superfamily. AGC Ser/Thr protein kinase family. GPRK subfamily. In terms of assembly, interacts with DRD3. Post-translationally, palmitoylated. In terms of tissue distribution, isoform GRK4A is expressed in testis. Isoform GRK4B is heterogeneously distributed in the kidney, with 20-fold enrichment in the outer medulla. Has a widespread but low level of expression in tissues other than testis.

Its subcellular location is the cytoplasm. It is found in the cell cortex. It carries out the reaction [G-protein-coupled receptor] + ATP = [G-protein-coupled receptor]-phosphate + ADP + H(+). Inhibited by heparin. In terms of biological role, specifically phosphorylates the activated forms of G protein-coupled receptors. Plays an important role in the regulation of renal sodium handling and blood pressure. The polypeptide is G protein-coupled receptor kinase 4 (Grk4) (Rattus norvegicus (Rat)).